Here is a 443-residue protein sequence, read N- to C-terminus: F-box only protein 39 (443 aa).

The 47-residue stretch at 13–59 (QSCWATLPDVCLRRVFWWLGDRDRSRAALVCRKWNQIMYSADLWRYR) folds into the F-box domain.

In terms of assembly, directly interacts with SKP1 and CUL1.

Functionally, substrate-recognition component of the SCF (SKP1-CUL1-F-box protein)-type E3 ubiquitin ligase complex. The sequence is that of F-box only protein 39 (Fbxo39) from Rattus norvegicus (Rat).